The following is a 342-amino-acid chain: Phosphate acyltransferase (342 aa).

Belongs to the PlsX family. Homodimer. Probably interacts with PlsY.

The protein resides in the cytoplasm. It carries out the reaction a fatty acyl-[ACP] + phosphate = an acyl phosphate + holo-[ACP]. The protein operates within lipid metabolism; phospholipid metabolism. Functionally, catalyzes the reversible formation of acyl-phosphate (acyl-PO(4)) from acyl-[acyl-carrier-protein] (acyl-ACP). This enzyme utilizes acyl-ACP as fatty acyl donor, but not acyl-CoA. The polypeptide is Phosphate acyltransferase (Shewanella baltica (strain OS155 / ATCC BAA-1091)).